The primary structure comprises 450 residues: ATP-dependent protease ATPase subunit HslU (450 aa).

ATP is bound by residues Val-29, 71 to 76 (GVGKTE), Asp-261, Glu-328, and Arg-400.

Belongs to the ClpX chaperone family. HslU subfamily. As to quaternary structure, a double ring-shaped homohexamer of HslV is capped on each side by a ring-shaped HslU homohexamer. The assembly of the HslU/HslV complex is dependent on binding of ATP.

The protein resides in the cytoplasm. In terms of biological role, ATPase subunit of a proteasome-like degradation complex; this subunit has chaperone activity. The binding of ATP and its subsequent hydrolysis by HslU are essential for unfolding of protein substrates subsequently hydrolyzed by HslV. HslU recognizes the N-terminal part of its protein substrates and unfolds these before they are guided to HslV for hydrolysis. In Rickettsia felis (strain ATCC VR-1525 / URRWXCal2) (Rickettsia azadi), this protein is ATP-dependent protease ATPase subunit HslU.